An 879-amino-acid chain; its full sequence is Metabotropic glutamate receptor 3 (879 aa).

Residues 1 to 24 form the signal peptide; it reads MKMLTRLQVLTLALFSKGFLLSLG. Topologically, residues 25–577 are extracellular; that stretch reads DHNFLRREIK…DYIRWEDAWA (553 aa). Cysteines 57 and 99 form a disulfide. L-glutamate-binding positions include Ser151 and 172–174; that span reads AST. Asn209 carries N-linked (GlcNAc...) asparagine glycosylation. An L-glutamate-binding site is contributed by Tyr222. Cystine bridges form between Cys240–Cys527, Cys361–Cys373, Cys412–Cys419, Cys509–Cys528, Cys513–Cys531, Cys534–Cys546, and Cys549–Cys562. Asn292 carries an N-linked (GlcNAc...) asparagine glycan. Asp301 provides a ligand contact to L-glutamate. Lys389 lines the L-glutamate pocket. 2 N-linked (GlcNAc...) asparagine glycosylation sites follow: Asn414 and Asn439. A helical transmembrane segment spans residues 578-598; the sequence is IGPVTIACLGFMCTCMVITVF. The Cytoplasmic portion of the chain corresponds to 599–613; that stretch reads IKHNNTPLVKASGRE. Residues 614–634 traverse the membrane as a helical segment; that stretch reads LCYILLFGVGLSYCMTFFFIA. The Extracellular segment spans residues 635–688; sequence KPSPVICALRRLGLGSSFAICYSALLTKTNCIARIFDGVKNGAQRPKFISPSSQ. Residues 689–709 traverse the membrane as a helical segment; the sequence is VFICLGLILVQIVMVSVWLIL. The Cytoplasmic portion of the chain corresponds to 710-735; the sequence is EAPGTRRYTLAEKRETVILKCNVKDS. Residues 736–756 traverse the membrane as a helical segment; it reads SMLISLTYDVILVILCTVYAF. The Extracellular portion of the chain corresponds to 757–769; sequence KTRKCPENFNEAK. The helical transmembrane segment at 770–790 threads the bilayer; that stretch reads FIGFTMYTTCIIWLAFLPIFY. Over 791-807 the chain is Cytoplasmic; sequence VTSSDYRVQTTTMCISV. The helical transmembrane segment at 808 to 828 threads the bilayer; sequence SLSGFVVLGCLFAPKVHIILF. The Extracellular portion of the chain corresponds to 829-879; sequence QPQKNVVTHRLHLNRFSVSGTGTTYSQSSASMYVPTVCNGREVLDSTTSSL.

It belongs to the G-protein coupled receptor 3 family. In terms of assembly, interacts with TAMALIN.

The protein resides in the cell membrane. G-protein coupled receptor for glutamate. Ligand binding causes a conformation change that triggers signaling via guanine nucleotide-binding proteins (G proteins) and modulates the activity of down-stream effectors. Signaling inhibits adenylate cyclase activity. This chain is Metabotropic glutamate receptor 3 (GRM3), found in Macaca fascicularis (Crab-eating macaque).